A 1049-amino-acid chain; its full sequence is MATTRKLVVEVVDAKDLTPKDGHGTSSPYVVLDYYGQRRRTRTIVRDLNPVWNETLEFSLAKRPSHQLFTDVLELDMYHDKNFGQTRRNNFLGRIRLGSDQFVGQGEEALIYYPLEKKSLFNLVQGEIGLRVYYADEKPPPLKPTVAPLETVVEEKTEETKAEGPDESKPPPETNDIPAEVKETVKPPQPPPEESSPAEGPKPDEEASPPLQENATVGGEEPPASESDKNEAEAKPVEEPPQNQPDGEDIVLESEDTMSWASAPRSPLPEVIISRSVSGSIPETKNGPQPLRRSVSETASYTSEISDVSTIERSTFDLVEKMHYVFIRVVKARSLPTSGSPVTKISLSGTMIQSKPARKTSCFEWDQTFAFLRDSPDLSSSPILEISVWDSSTGIETSQFLGGICFDVSEIPLRDPPDSPLAPQWYRLEGGGAHNSDLMLATWTGTQADESFPDAWKTDTAGNVTARAKVYMSSKLWYLRATVIEAQDLLPPQLTAFKEASFQLKAQLGSQVQKTKSAVTRNGAPSWNEDLLFVAAEPFSDQLVFTLEYRTSKGPVTVGMARVPLSAIERRVDDRLVASRWLGLEDPNDEKRGNRSRVHIRLCFDGGYHVMDEAAHVCSDYRPTARQLWKPAVGIVELGIIGCKNLLPMKTVNGKGSTDAYTVAKYGSKWVRTRTVSDSLDPKWNEQYTWKVYDPCTVLTIGVFDSWGVYEVDGGKEATRQDLRIGKVRIRISTLETGKAYRNTYPLLMLVNGGVKKLGEIELAVRFVRTAPPLDFLHVYTQPLLPLMHHIKPLSLFQEDMLRNTAVKILAAHLSRSEPPLRPEIVRYMLDADTHTFSMRKVRANWLRIVNVVAGMVDVVRWVDDTRFWKNPTSTLLVHALVVMLIWFPDLIVPTLAFYLFVIGAWNYRFRSRAALPHFDPRLSLADAADRDELDEEFDVVPSNRPPEMVRLRYDKLRNVGARVQTILGEVAAQGEKMQALVTWRDPRATGIFVGLCFFVALVLYLVPTKMVAMASGFYYFRHPIFRDRKPSPVLNFFRRLPSLSDRLM.

A C2 1 domain is found at 1-112 (MATTRKLVVE…VGQGEEALIY (112 aa)). The tract at residues 136–249 (DEKPPPLKPT…PPQNQPDGED (114 aa)) is disordered. Basic and acidic residues-rich tracts occupy residues 153 to 170 (VEEK…ESKP) and 226 to 238 (ESDK…KPVE). 3 C2 domains span residues 302-426 (TSEI…PQWY), 460-582 (TAGN…SRWL), and 617-745 (VCSD…RNTY). Ca(2+) is bound by residues Ser338, Asp390, Thr393, and Ser398. 2 helical membrane-spanning segments follow: residues 883 to 903 (VMLI…LFVI) and 989 to 1009 (ATGI…LVPT).

Belongs to the MCTP family. It depends on Ca(2+) as a cofactor. In terms of tissue distribution, expressed in the vascular tissues of roots, cotyledons and rosette leaves. Accumulates in roots meristems and shoot apical meristems (SAMs). Observed in flowers.

The protein localises to the endoplasmic reticulum membrane. Its function is as follows. May function as a signaling molecule by regulating the trafficking of other regulators. The sequence is that of Multiple C2 domain and transmembrane region protein 16 from Arabidopsis thaliana (Mouse-ear cress).